Reading from the N-terminus, the 424-residue chain is UDP-glycosyltransferase 76H1 (424 aa).

Residues Ser248, 306-307 (WA), 324-332 (HCGWNSTIE), and 346-349 (FADQ) each bind UDP-alpha-D-glucose.

This sequence belongs to the UDP-glycosyltransferase family.

In terms of biological role, may glycosylate diterpenes or flavonols in leaves. This Stevia rebaudiana (Stevia) protein is UDP-glycosyltransferase 76H1.